The chain runs to 302 residues: FeMo cofactor biosynthesis protein NifB (302 aa).

The Radical SAM core domain maps to 22 to 264 (HDKYGRVHLP…PQFRACGQCR (243 aa)). [4Fe-4S] cluster contacts are provided by cysteine 36, cysteine 40, and cysteine 43. Positions 91, 142, and 194 each coordinate S-adenosyl-L-methionine. Residues cysteine 260 and cysteine 263 each contribute to the [4Fe-4S] cluster site.

This sequence belongs to the radical SAM superfamily. NifB family. As to quaternary structure, monomer. [4Fe-4S] cluster serves as cofactor.

It participates in cofactor biosynthesis; Fe-Mo cofactor biosynthesis. In terms of biological role, involved in the biosynthesis of the iron-molybdenum cofactor (FeMo-co or M-cluster) found in the dinitrogenase enzyme of the nitrogenase complex in nitrogen-fixing microorganisms. NifB catalyzes the crucial step of radical SAM-dependent carbide insertion that occurs concomitant with the insertion of a 9th sulfur and the rearrangement/coupling of two [4Fe-4S] clusters into a [8Fe-9S-C] cluster, the precursor to the M-cluster. This is FeMo cofactor biosynthesis protein NifB from Methanocaldococcus infernus (strain DSM 11812 / JCM 15783 / ME).